Reading from the N-terminus, the 199-residue chain is ATP synthase subunit a (199 aa).

A run of 5 helical transmembrane segments spans residues 2-22 (NQVYFLDIFMFVFVLQFLFYF), 53-73 (VISVFTFIILLTCCFGGYFTY), 80-100 (MVEFTFVYAAVAWLSTLLTFI), 141-161 (LTVNIMVGHLISMMLYQGLEL), and 169-189 (WLSIFAIMMECFVFFIQSYIF).

It belongs to the ATPase A chain family. F-type ATPases have 2 components, CF(1) - the catalytic core - and CF(0) - the membrane proton channel. CF(1) has five subunits: alpha(3), beta(3), gamma(1), delta(1), epsilon(1). CF(0) has three main subunits: a, b and c.

The protein localises to the mitochondrion inner membrane. Functionally, mitochondrial membrane ATP synthase (F(1)F(0) ATP synthase or Complex V) produces ATP from ADP in the presence of a proton gradient across the membrane which is generated by electron transport complexes of the respiratory chain. F-type ATPases consist of two structural domains, F(1) - containing the extramembraneous catalytic core and F(0) - containing the membrane proton channel, linked together by a central stalk and a peripheral stalk. During catalysis, ATP synthesis in the catalytic domain of F(1) is coupled via a rotary mechanism of the central stalk subunits to proton translocation. Key component of the proton channel; it may play a direct role in the translocation of protons across the membrane. This Caenorhabditis briggsae protein is ATP synthase subunit a (atp6).